Consider the following 324-residue polypeptide: MSVSAAVAAASTSRTLVLARRRSPPASRVAATSRGRPFSSGPHPLAVSPATRAPAMATDCAAAAAAAGSKKKKEVLIFDAEEDLAVSLAKYTAELSAKLAAERGAFTVVLSGGSLIKNIRKLAEPPYLDSVDWSKWHVFWVDERVVPKDHEDSNYKLALDGFLSKVPIPTGQVYAINDALSAEGAADDYETCLKQLVKNGVIAMSQSTGFPRFDVMLLGMGPDGHIASLFPGHPLVNENKKWVTYIKDSPKPPPERITFTFPVINSSAYVAMVVTGAGKAGAVQKALSDKQTSSDLLPVEMAVLQDGEFTWFTDKPAVSMLQNK.

A chloroplast-targeting transit peptide spans Met-1–Ala-61. Residues Arg-20–His-43 are disordered. Over residues Pro-24–Arg-34 the composition is skewed to low complexity.

The protein belongs to the glucosamine/galactosamine-6-phosphate isomerase family. 6-phosphogluconolactonase subfamily.

It is found in the plastid. The protein localises to the chloroplast. It carries out the reaction 6-phospho-D-glucono-1,5-lactone + H2O = 6-phospho-D-gluconate + H(+). Its pathway is carbohydrate degradation; pentose phosphate pathway; D-ribulose 5-phosphate from D-glucose 6-phosphate (oxidative stage): step 2/3. Its function is as follows. Hydrolysis of 6-phosphogluconolactone to 6-phosphogluconate. This chain is Probable 6-phosphogluconolactonase 4, chloroplastic, found in Oryza sativa subsp. indica (Rice).